The chain runs to 431 residues: MLNDQDRIFTNLYGMGDRSLAGAKKRGHWDGTAAIIQRGRDKIIDEMKASGLRGRGGAGFPTGMKWSFMPKESDGRPSYLVINADESEPATCKDREIMRHDPHTLIEGALIASFAMGAHAAYIYIRGEFIREREALQAAIDECYDAGLLGRNAAGSGWDFDLYLHHGAGAYICGEETALLESLEGKKGMPRMKPPFPAGAGLYGCPTTVNNVESIAVVPTILRRGAEWFASFGRPNNAGVKLFGLTGHVNTPCVVEEAMSIPMRELIEKHGGGIRGGWKNLKAVIPGGASCPVLTAEQCENAIMDYDGMRDVRSSFGTACMIVMDQSTDVVKAIWRLSKFFKHESCGQCTPCREGTGWMMRVMERLVRGDAEVEEIDMLFDVTKQVEGHTICALGDAAAWPIQGLIRNFREEIEDRIKAKRTGRMGAMAAE.

54 to 63 (GRGGAGFPTG) provides a ligand contact to NAD(+). 167–214 (GAGAYICGEETALLESLEGKKGMPRMKPPFPAGAGLYGCPTTVNNVES) serves as a coordination point for FMN. Cys-346, Cys-349, Cys-352, and Cys-392 together coordinate [4Fe-4S] cluster.

It belongs to the complex I 51 kDa subunit family. NDH-1 is composed of at least 14 different subunits, Nqo1 to Nqo14. The complex has a L-shaped structure, with the hydrophobic arm (subunits Nqo7, Nqo8, Nqo10 to Nqo14) embedded in the inner membrane and the hydrophilic peripheral arm (subunits Nqo1 to Nqo6, Nqo9) protruding into the bacterial cytoplasm. The hydrophilic domain contains all the redox centers. FMN is required as a cofactor. [4Fe-4S] cluster serves as cofactor.

The protein localises to the cell inner membrane. The enzyme catalyses a quinone + NADH + 5 H(+)(in) = a quinol + NAD(+) + 4 H(+)(out). Functionally, NDH-1 shuttles electrons from NADH, via FMN and iron-sulfur (Fe-S) centers, to quinones in the respiratory chain. The immediate electron acceptor for the enzyme in this species is believed to be ubiquinone. Couples the redox reaction to proton translocation (for every two electrons transferred, four hydrogen ions are translocated across the cytoplasmic membrane), and thus conserves the redox energy in a proton gradient. The sequence is that of NADH-quinone oxidoreductase chain 1 (nqo1) from Paracoccus denitrificans.